The primary structure comprises 366 residues: MSHNTFGHLFRVTTFGESHGVALGCVVDGCPPGLALEADEIQAELDRRKPGQSRFTTQRREPDQVKILSGVFSDDRTGGRQLTTGTPIALMIENTDQRSKDYSEIRDSYRPGHADFTYDAKYGIRDYRGGGRSSARETAARVAAGAVARKVIPGITIRAALVQMGPHAIDRTNWDWEQVGQNPFFCPDAKAAALYETYLDEIRKDGSSVGAVIEVVAEGVPPGLGAPIYGKLDADLAAAMMSINAVKGVEIGDGFAAAALRGEDNADEMRAGNDGRPRFLANHAGGILGGISSGEPVVVRFAVKPTSSILTPRQSVNRDGAEIDLITKGRHDPCVGIRAVPVAEAMMACVLADHTLRHRGQNGERP.

2 residues coordinate NADP(+): Arg-48 and Arg-54. FMN-binding positions include 132 to 134 (RSS), 244 to 245 (NA), Gly-289, 304 to 308 (KPTSS), and Arg-330.

The protein belongs to the chorismate synthase family. As to quaternary structure, homotetramer. FMNH2 is required as a cofactor.

It catalyses the reaction 5-O-(1-carboxyvinyl)-3-phosphoshikimate = chorismate + phosphate. It functions in the pathway metabolic intermediate biosynthesis; chorismate biosynthesis; chorismate from D-erythrose 4-phosphate and phosphoenolpyruvate: step 7/7. Catalyzes the anti-1,4-elimination of the C-3 phosphate and the C-6 proR hydrogen from 5-enolpyruvylshikimate-3-phosphate (EPSP) to yield chorismate, which is the branch point compound that serves as the starting substrate for the three terminal pathways of aromatic amino acid biosynthesis. This reaction introduces a second double bond into the aromatic ring system. The sequence is that of Chorismate synthase from Methylorubrum extorquens (strain PA1) (Methylobacterium extorquens).